A 331-amino-acid polypeptide reads, in one-letter code: Benzylsuccinate synthase activating enzyme (331 aa).

The Radical SAM core domain occupies 15 to 315 (QDGPGIRTTI…VTIGGIVGIA (301 aa)). Residues Cys-29, Cys-33, Cys-36, Cys-55, Cys-58, Cys-61, Cys-65, Cys-89, Cys-92, Cys-95, and Cys-99 each coordinate [4Fe-4S] cluster. S-adenosyl-L-methionine is bound at residue 35–37 (WCH). 4Fe-4S ferredoxin-type domains follow at residues 46–75 (QEFY…LVRN) and 80–109 (TIVQ…IVGQ). S-adenosyl-L-methionine-binding positions include Gly-139, 189–191 (DLK), and His-263.

Belongs to the organic radical-activating enzymes family. [4Fe-4S] cluster serves as cofactor.

It carries out the reaction glycyl-[protein] + reduced [flavodoxin] + S-adenosyl-L-methionine = glycin-2-yl radical-[protein] + semiquinone [flavodoxin] + 5'-deoxyadenosine + L-methionine + H(+). It functions in the pathway xenobiotic degradation; toluene degradation [regulation]. Its function is as follows. Activation of benzylsuccinate synthase under anaerobic conditions by generation of an organic free radical, using S-adenosylmethionine and reduced flavodoxin as cosubstrates to produce 5'-deoxy-adenosine. The polypeptide is Benzylsuccinate synthase activating enzyme (bssD) (Thauera aromatica).